The primary structure comprises 420 residues: Gamma-glutamyl phosphate reductase (420 aa).

The protein belongs to the gamma-glutamyl phosphate reductase family.

Its subcellular location is the cytoplasm. The enzyme catalyses L-glutamate 5-semialdehyde + phosphate + NADP(+) = L-glutamyl 5-phosphate + NADPH + H(+). It functions in the pathway amino-acid biosynthesis; L-proline biosynthesis; L-glutamate 5-semialdehyde from L-glutamate: step 2/2. Functionally, catalyzes the NADPH-dependent reduction of L-glutamate 5-phosphate into L-glutamate 5-semialdehyde and phosphate. The product spontaneously undergoes cyclization to form 1-pyrroline-5-carboxylate. The sequence is that of Gamma-glutamyl phosphate reductase from Cereibacter sphaeroides (strain ATCC 17023 / DSM 158 / JCM 6121 / CCUG 31486 / LMG 2827 / NBRC 12203 / NCIMB 8253 / ATH 2.4.1.) (Rhodobacter sphaeroides).